The chain runs to 524 residues: Nuclear distribution protein PAC1 (524 aa).

Positions 65–90 (STVLRLQRKIIDLENEVGTLRSIVDG) form a coiled coil. WD repeat units follow at residues 121–160 (QQNQLVMASVIHPVLPVIFGGCSDGSIIVWNIVNDDTSIP), 166–217 (AHTR…HIRT), 220–262 (GHDH…KSFT), 277–317 (NSQL…GLAL), 353–394 (IPQE…LIPH), 415–454 (GHQSWVKAIAIHPNGRFIFSGSDDKTIKVWDLANLNVTGS), 463–492 (GHDGFINDLDFAAFNRDSGKEDKIKEDATE), and 493–524 (EESHQQLMKFIEGRMRCLFISGAADNSIKLWS).

Belongs to the WD repeat LIS1/nudF family. As to quaternary structure, self-associates. Interacts with NDL1 and dynein.

It localises to the cytoplasm. The protein localises to the cytoskeleton. The protein resides in the spindle pole. Its function is as follows. Positively regulates the activity of the minus-end directed microtubule motor protein dynein. Plays a central role in positioning the mitotic spindle at the bud neck during cell division. Targets cytoplasmic dynein to microtubule plus ends, thereby promoting dynein-mediated microtubule sliding along the bud cortex and consequently the movement of the mitotic spindle to the bud neck. The chain is Nuclear distribution protein PAC1 from Scheffersomyces stipitis (strain ATCC 58785 / CBS 6054 / NBRC 10063 / NRRL Y-11545) (Yeast).